Reading from the N-terminus, the 425-residue chain is Histidine--tRNA ligase (425 aa).

This sequence belongs to the class-II aminoacyl-tRNA synthetase family. In terms of assembly, homodimer.

The protein resides in the cytoplasm. It carries out the reaction tRNA(His) + L-histidine + ATP = L-histidyl-tRNA(His) + AMP + diphosphate + H(+). The protein is Histidine--tRNA ligase of Aeromonas salmonicida (strain A449).